We begin with the raw amino-acid sequence, 291 residues long: Exosome complex exonuclease RRP42 (291 aa).

Alanine 2 is subject to N-acetylalanine. Position 116 is an N6-acetyllysine (lysine 116).

It belongs to the RNase PH family. As to quaternary structure, component of the RNA exosome core complex (Exo-9), composed of EXOSC1, EXOSC2, EXOSC3, EXOSC4, EXOSC5, EXOSC6, EXOSC7, EXOSC8 and EXOSC9; within the complex interacts with EXOSC2 and EXOSC4. The catalytically inactive RNA exosome core complex (Exo-9) associates with the catalytic subunit EXOSC10/RRP6. Exo-9 may associate with DIS3 to form the nucleolar exosome complex, or DIS3L to form the cytoplasmic exosome complex. Exo-9 is formed by a hexameric base ring consisting of the heterodimers EXOSC4-EXOSC9, EXOSC5-EXOSC8 and EXOSC6-EXOSC7, and a cap ring consisting of EXOSC1, EXOSC2 and EXOSC3. The RNA exosome complex associates with cofactors C1D/RRP47, MPHOSPH6/MPP6 and MTREX/MTR4. Interacts with ZC3HAV1. Interacts with DIS3; the interaction is direct.

It localises to the nucleus. Its subcellular location is the nucleolus. The protein localises to the cytoplasm. Functionally, non-catalytic component of the RNA exosome complex which has 3'-&gt;5' exoribonuclease activity and participates in a multitude of cellular RNA processing and degradation events. In the nucleus, the RNA exosome complex is involved in proper maturation of stable RNA species such as rRNA, snRNA and snoRNA, in the elimination of RNA processing by-products and non-coding 'pervasive' transcripts, such as antisense RNA species and promoter-upstream transcripts (PROMPTs), and of mRNAs with processing defects, thereby limiting or excluding their export to the cytoplasm. The RNA exosome may be involved in Ig class switch recombination (CSR) and/or Ig variable region somatic hypermutation (SHM) by targeting AICDA deamination activity to transcribed dsDNA substrates. In the cytoplasm, the RNA exosome complex is involved in general mRNA turnover and specifically degrades inherently unstable mRNAs containing AU-rich elements (AREs) within their 3' untranslated regions, and in RNA surveillance pathways, preventing translation of aberrant mRNAs. It seems to be involved in degradation of histone mRNA. The catalytic inactive RNA exosome core complex of 9 subunits (Exo-9) is proposed to play a pivotal role in the binding and presentation of RNA for ribonucleolysis, and to serve as a scaffold for the association with catalytic subunits and accessory proteins or complexes. The protein is Exosome complex exonuclease RRP42 (Exosc7) of Mus musculus (Mouse).